We begin with the raw amino-acid sequence, 147 residues long: D-aminoacyl-tRNA deacylase (147 aa).

Positions 136–137 (GP) match the Gly-cisPro motif, important for rejection of L-amino acids motif.

Belongs to the DTD family. As to quaternary structure, homodimer.

It localises to the cytoplasm. The enzyme catalyses glycyl-tRNA(Ala) + H2O = tRNA(Ala) + glycine + H(+). It carries out the reaction a D-aminoacyl-tRNA + H2O = a tRNA + a D-alpha-amino acid + H(+). Its function is as follows. An aminoacyl-tRNA editing enzyme that deacylates mischarged D-aminoacyl-tRNAs. Also deacylates mischarged glycyl-tRNA(Ala), protecting cells against glycine mischarging by AlaRS. Acts via tRNA-based rather than protein-based catalysis; rejects L-amino acids rather than detecting D-amino acids in the active site. By recycling D-aminoacyl-tRNA to D-amino acids and free tRNA molecules, this enzyme counteracts the toxicity associated with the formation of D-aminoacyl-tRNA entities in vivo and helps enforce protein L-homochirality. The protein is D-aminoacyl-tRNA deacylase of Persephonella marina (strain DSM 14350 / EX-H1).